A 1416-amino-acid chain; its full sequence is DNA-directed RNA polymerase subunit beta' (1416 aa).

Zn(2+)-binding residues include cysteine 71, cysteine 73, cysteine 86, and cysteine 89. Mg(2+)-binding residues include aspartate 461, aspartate 463, and aspartate 465. Residues cysteine 815, cysteine 889, cysteine 896, and cysteine 899 each coordinate Zn(2+).

This sequence belongs to the RNA polymerase beta' chain family. As to quaternary structure, the RNAP catalytic core consists of 2 alpha, 1 beta, 1 beta' and 1 omega subunit. When a sigma factor is associated with the core the holoenzyme is formed, which can initiate transcription. Requires Mg(2+) as cofactor. It depends on Zn(2+) as a cofactor.

The catalysed reaction is RNA(n) + a ribonucleoside 5'-triphosphate = RNA(n+1) + diphosphate. In terms of biological role, DNA-dependent RNA polymerase catalyzes the transcription of DNA into RNA using the four ribonucleoside triphosphates as substrates. The protein is DNA-directed RNA polymerase subunit beta' of Haemophilus influenzae (strain PittEE).